The chain runs to 21 residues: Cytoplasmic filament protein A (21 aa).

Residues alanine 1–glycine 21 form a disordered region.

It is found in the cytoplasm. Component of the cytoplasmic filaments that run the length of the organism just underneath the cytoplasmic membrane. The protein is Cytoplasmic filament protein A (cfpA) of Treponema phagedenis.